Reading from the N-terminus, the 118-residue chain is Co-chaperonin GroES (118 aa).

It belongs to the GroES chaperonin family. As to quaternary structure, heptamer of 7 subunits arranged in a ring. Interacts with the chaperonin GroEL.

It localises to the cytoplasm. Its function is as follows. Together with the chaperonin GroEL, plays an essential role in assisting protein folding. The GroEL-GroES system forms a nano-cage that allows encapsulation of the non-native substrate proteins and provides a physical environment optimized to promote and accelerate protein folding. GroES binds to the apical surface of the GroEL ring, thereby capping the opening of the GroEL channel. In Helicobacter acinonychis (strain Sheeba), this protein is Co-chaperonin GroES.